Reading from the N-terminus, the 1184-residue chain is C5a peptidase (1184 aa).

The first 31 residues, 1–31 (MRKKQKLPFDKLAIALMSTSILLNAQSDIKA), serve as a signal peptide directing secretion. 2 stretches are compositionally biased toward polar residues: residues 33–52 (TVTE…QPTA) and 89–100 (AKTTDTPATSKA). The disordered stretch occupies residues 33-117 (TVTEDTPATE…PSQVKTLQEK (85 aa)). The Peptidase S8 domain maps to 99–581 (KATIRDLNDP…AGAVDAKKAS (483 aa)). Active-site charge relay system residues include D130, H193, and S512. 4 stretches are compositionally biased toward basic and acidic residues: residues 1029–1054 (EGHS…KPEQ), 1061–1071 (PDKKPETKPEQ), 1078–1088 (PDKKPEAKPEQ), and 1095–1107 (PDKK…EKDS). The segment at 1029 to 1150 (EGHSNKPEQD…RDQLPTTNDK (122 aa)) is disordered. Repeat copies occupy residues 1034–1067 (KPEQ…KPET), 1068–1084 (KPEQ…KPEA), 1085–1101 (KPEQ…KPET), and 1102–1118 (KPEK…TPQK). Residues 1034-1118 (KPEQDGSDQV…GQTPGKTPQK (85 aa)) are 4 X 17 AA tandem repeats. A compositionally biased stretch (polar residues) spans 1109–1123 (GQTPGKTPQKGQPSR). Positions 1144–1148 (LPTTN) match the LPXTG sorting signal motif. T1147 bears the Pentaglycyl murein peptidoglycan amidated threonine mark. Positions 1148–1184 (NDKDTNRLHLLKLVMTTFFFGLVAHIFKTKRQKETKK) are cleaved as a propeptide — removed by sortase.

Belongs to the peptidase S8 family. In terms of processing, cleaved by SpeB protease; leading to its degradation. Degradation by SpeB is probably strictly regulated to preserve integrity of C5a peptidase.

It localises to the secreted. The protein resides in the cell wall. It catalyses the reaction The primary cleavage site is at 67-His-|-Lys-68 in human C5a with a minor secondary cleavage site at 58-Ala-|-Ser-59.. Its function is as follows. This virulence factor of S.pyogenes specifically cleaves the human serum chemotaxin C5a at '68-Lys-|-Asp-69' bond near its C-terminus, destroying its ability to serve as a chemoattractant. The sequence is that of C5a peptidase (scpA) from Streptococcus pyogenes serotype M6 (strain ATCC BAA-946 / MGAS10394).